The primary structure comprises 506 residues: Aldehyde dehydrogenase [NAD(P)+] 1 (506 aa).

Glu268 serves as the catalytic Proton acceptor. Residue Cys302 is the Nucleophile of the active site.

The protein belongs to the aldehyde dehydrogenase family.

It localises to the cytoplasm. It catalyses the reaction an aldehyde + NAD(+) + H2O = a carboxylate + NADH + 2 H(+). The catalysed reaction is 3-aminopropanal + NAD(+) + H2O = beta-alanine + NADH + 2 H(+). Cytoplasmic aldehyde dehydrogenase involved in ethanol oxidation. Required for pantothenic acid production through the conversion of 3-aminopropanal to beta-alanine, an intermediate in pantothenic acid (vitamin B5) and coenzyme A (CoA) biosynthesis. This Saccharomyces cerevisiae (strain ATCC 204508 / S288c) (Baker's yeast) protein is Aldehyde dehydrogenase [NAD(P)+] 1 (ALD2).